The chain runs to 393 residues: NAD(P)H-quinone oxidoreductase subunit H, chloroplastic (393 aa).

This sequence belongs to the complex I 49 kDa subunit family. As to quaternary structure, NDH is composed of at least 16 different subunits, 5 of which are encoded in the nucleus.

The protein localises to the plastid. It is found in the chloroplast thylakoid membrane. The catalysed reaction is a plastoquinone + NADH + (n+1) H(+)(in) = a plastoquinol + NAD(+) + n H(+)(out). It carries out the reaction a plastoquinone + NADPH + (n+1) H(+)(in) = a plastoquinol + NADP(+) + n H(+)(out). Functionally, NDH shuttles electrons from NAD(P)H:plastoquinone, via FMN and iron-sulfur (Fe-S) centers, to quinones in the photosynthetic chain and possibly in a chloroplast respiratory chain. The immediate electron acceptor for the enzyme in this species is believed to be plastoquinone. Couples the redox reaction to proton translocation, and thus conserves the redox energy in a proton gradient. The protein is NAD(P)H-quinone oxidoreductase subunit H, chloroplastic of Oryza nivara (Indian wild rice).